Consider the following 154-residue polypeptide: Endoribonuclease YbeY (154 aa).

Positions 114, 118, and 124 each coordinate Zn(2+).

Belongs to the endoribonuclease YbeY family. Zn(2+) serves as cofactor.

Its subcellular location is the cytoplasm. Single strand-specific metallo-endoribonuclease involved in late-stage 70S ribosome quality control and in maturation of the 3' terminus of the 16S rRNA. This is Endoribonuclease YbeY from Haemophilus influenzae (strain ATCC 51907 / DSM 11121 / KW20 / Rd).